The following is a 341-amino-acid chain: Ribosomal RNA small subunit methyltransferase C (341 aa).

The protein belongs to the methyltransferase superfamily. RsmC family. Monomer.

The protein localises to the cytoplasm. The catalysed reaction is guanosine(1207) in 16S rRNA + S-adenosyl-L-methionine = N(2)-methylguanosine(1207) in 16S rRNA + S-adenosyl-L-homocysteine + H(+). Functionally, specifically methylates the guanine in position 1207 of 16S rRNA in the 30S particle. The polypeptide is Ribosomal RNA small subunit methyltransferase C (Shewanella pealeana (strain ATCC 700345 / ANG-SQ1)).